The primary structure comprises 420 residues: 4-hydroxy-3-methylbut-2-en-1-yl diphosphate synthase (flavodoxin) (420 aa).

[4Fe-4S] cluster is bound by residues Cys-307, Cys-310, Cys-353, and Glu-360.

This sequence belongs to the IspG family. [4Fe-4S] cluster is required as a cofactor.

It carries out the reaction (2E)-4-hydroxy-3-methylbut-2-enyl diphosphate + oxidized [flavodoxin] + H2O + 2 H(+) = 2-C-methyl-D-erythritol 2,4-cyclic diphosphate + reduced [flavodoxin]. It participates in isoprenoid biosynthesis; isopentenyl diphosphate biosynthesis via DXP pathway; isopentenyl diphosphate from 1-deoxy-D-xylulose 5-phosphate: step 5/6. Its function is as follows. Converts 2C-methyl-D-erythritol 2,4-cyclodiphosphate (ME-2,4cPP) into 1-hydroxy-2-methyl-2-(E)-butenyl 4-diphosphate. This Brucella suis (strain ATCC 23445 / NCTC 10510) protein is 4-hydroxy-3-methylbut-2-en-1-yl diphosphate synthase (flavodoxin).